Here is a 639-residue protein sequence, read N- to C-terminus: DNA mismatch repair protein MutL (639 aa).

A disordered region spans residues 336 to 392 (SAHDDPTPAISGAARDEEPRGVENRASAGENRFNRPASSPVASAPRPAHVAAPRMPA). Residues 349–358 (ARDEEPRGVE) are compositionally biased toward basic and acidic residues. Low complexity predominate over residues 370–392 (RPASSPVASAPRPAHVAAPRMPA).

This sequence belongs to the DNA mismatch repair MutL/HexB family.

Functionally, this protein is involved in the repair of mismatches in DNA. It is required for dam-dependent methyl-directed DNA mismatch repair. May act as a 'molecular matchmaker', a protein that promotes the formation of a stable complex between two or more DNA-binding proteins in an ATP-dependent manner without itself being part of a final effector complex. The protein is DNA mismatch repair protein MutL of Edwardsiella ictaluri (strain 93-146).